A 1342-amino-acid polypeptide reads, in one-letter code: DNA-directed RNA polymerase subunit beta (1342 aa).

Residues lysine 1022 and lysine 1200 each carry the N6-acetyllysine modification.

It belongs to the RNA polymerase beta chain family. In terms of assembly, the RNAP catalytic core consists of 2 alpha, 1 beta, 1 beta' and 1 omega subunit. When a sigma factor is associated with the core the holoenzyme is formed, which can initiate transcription.

It carries out the reaction RNA(n) + a ribonucleoside 5'-triphosphate = RNA(n+1) + diphosphate. DNA-dependent RNA polymerase catalyzes the transcription of DNA into RNA using the four ribonucleoside triphosphates as substrates. This chain is DNA-directed RNA polymerase subunit beta, found in Escherichia coli O6:K15:H31 (strain 536 / UPEC).